Reading from the N-terminus, the 142-residue chain is ATP synthase epsilon chain (142 aa).

Belongs to the ATPase epsilon chain family. F-type ATPases have 2 components, CF(1) - the catalytic core - and CF(0) - the membrane proton channel. CF(1) has five subunits: alpha(3), beta(3), gamma(1), delta(1), epsilon(1). CF(0) has three main subunits: a, b and c.

It localises to the cell inner membrane. Produces ATP from ADP in the presence of a proton gradient across the membrane. The polypeptide is ATP synthase epsilon chain (Coxiella burnetii (strain CbuK_Q154) (Coxiella burnetii (strain Q154))).